A 681-amino-acid chain; its full sequence is Chaperone protein htpG (681 aa).

Positions 1-326 (MQKGNIGVTT…SPDIPLNVSR (326 aa)) are a; substrate-binding. Residues 327–545 (SYLQSDSNVK…YMRRMKEMAN (219 aa)) are b. The interval 546–681 (IQAGMSFYGE…NFVKRSIELI (136 aa)) is c.

It belongs to the heat shock protein 90 family. As to quaternary structure, homodimer.

Its subcellular location is the cytoplasm. Its function is as follows. Molecular chaperone. Has ATPase activity. The polypeptide is Chaperone protein htpG (Bacteroides fragilis (strain YCH46)).